The sequence spans 878 residues: MKQLTSAQVRQMFLDFFKEKGHDVEPSASLIPDEDPTLLWINSGVATLKKYFDGRVVPNNPRITNAQKSIRTNDIENVGKTARHHTFFEMLGNFSVGDYFKEDAIPWAWEFLTSDKWIGLDPEKLYVTVYPKDKDAHRIWHEKVGLAEDRIIEVEDNFWDIGEGPCGPDSEIFYDRGQSFNNVSEDDPENYPGGENERYLEVWNIVFSEFNHLPNGEYVEQPHKNIDTGMGLERLVSVIQEAPTNFETDLFMPLIEATAAMSDHKQYGQNAADDISFKIIADHARAVTFAIGDGAMPANEGRGYVLRRLIRRAILNGKKLGINDAFMYKLVPIVGEIMHSYYPDVLEQKDFIEKVIRSEEDRFRETLNDGLRLLNQTIEAVKAENETEINGADAFKLFDTFGFPIELTTEYAEDEGLTVDQAGFEKEMAAQKARARNARSDEQSMGSQNEVLLNIKTKSEFTGYSELETESRLADIIQDNAEQESVTTGVAQLVFEATPFYAEMGGQVADQGIIKNLAGQVVAEVTDVQYAPNGQPLHTVKVLKEMISGVHYTLSVDPTFRGGVVKNHTATHLLDQALRDVLGEHTHQAGSLVEPDYLRFDFTNLGQVTPDQLAEVEQIVNDKIWAALPVNTVETDIETAKQMGAIALFTEKYGKTVRVVQIGDYSMELCGGTHANNTSDLGLFKITSESGIGAGTRRIEAVTSKAAFKYLNDKQVLLNELASELKVAQTKDLPKKIQQLQADLKAEQKENEQLKAKFAQEQAGNVFENVVEAGQWRLVAADAKVAGMNELRQLADQWQQKQISDVLVLATVAGDKVSLIVAVAPDAIKAGIKAGDLIKQIAPLVGGGGGGRPDMAQAGGKNPAGIPDALAAAKEFLA.

The Zn(2+) site is built by His-568, His-572, Cys-670, and His-674.

This sequence belongs to the class-II aminoacyl-tRNA synthetase family. Requires Zn(2+) as cofactor.

The protein resides in the cytoplasm. It catalyses the reaction tRNA(Ala) + L-alanine + ATP = L-alanyl-tRNA(Ala) + AMP + diphosphate. In terms of biological role, catalyzes the attachment of alanine to tRNA(Ala) in a two-step reaction: alanine is first activated by ATP to form Ala-AMP and then transferred to the acceptor end of tRNA(Ala). Also edits incorrectly charged Ser-tRNA(Ala) and Gly-tRNA(Ala) via its editing domain. The polypeptide is Alanine--tRNA ligase (Latilactobacillus sakei subsp. sakei (strain 23K) (Lactobacillus sakei subsp. sakei)).